Consider the following 192-residue polypeptide: Signal peptidase complex catalytic subunit SEC11C (192 aa).

Residues 1–28 (MVRAGAVGTHLPTSSLDIFGDLRKMNKR) lie on the Cytoplasmic side of the membrane. Residues 29 to 48 (QLYYQVLNFAMIVSSALMIW) traverse the membrane as a helical; Signal-anchor for type II membrane protein segment. Residues 49–192 (KGLIVLTGSE…GAYVLLKRES (144 aa)) are Lumenal-facing. Active-site charge relay system residues include Ser-68, His-108, and Asp-134. The C-terminal short (CTS) helix stretch occupies residues 177 to 188 (ALVAVMGAYVLL).

The protein belongs to the peptidase S26B family. In terms of assembly, component of the signal peptidase complex paralog C (SPC-C) composed of a catalytic subunit SEC11C and three accessory subunits SPCS1, SPCS2 and SPCS3. Within the complex, interacts with SPCS2 and SPCS3. The complex induces a local thinning of the ER membrane which is used to measure the length of the signal peptide (SP) h-region of protein substrates. This ensures the selectivity of the complex towards h-regions shorter than 18-20 amino acids. Post-translationally, may undergo processing at the N-terminus.

It localises to the endoplasmic reticulum membrane. It carries out the reaction Cleavage of hydrophobic, N-terminal signal or leader sequences from secreted and periplasmic proteins.. Functionally, catalytic component of the signal peptidase complex (SPC) which catalyzes the cleavage of N-terminal signal sequences from nascent proteins as they are translocated into the lumen of the endoplasmic reticulum. Specifically cleaves N-terminal signal peptides that contain a hydrophobic alpha-helix (h-region) shorter than 18-20 amino acids. In Rattus norvegicus (Rat), this protein is Signal peptidase complex catalytic subunit SEC11C (Sec11c).